Consider the following 261-residue polypeptide: Ribonuclease PH (261 aa).

Residues Arg-87 and 125 to 127 (GTR) each bind phosphate.

It belongs to the RNase PH family. In terms of assembly, homohexameric ring arranged as a trimer of dimers.

It catalyses the reaction tRNA(n+1) + phosphate = tRNA(n) + a ribonucleoside 5'-diphosphate. In terms of biological role, phosphorolytic 3'-5' exoribonuclease that plays an important role in tRNA 3'-end maturation. Removes nucleotide residues following the 3'-CCA terminus of tRNAs; can also add nucleotides to the ends of RNA molecules by using nucleoside diphosphates as substrates, but this may not be physiologically important. Probably plays a role in initiation of 16S rRNA degradation (leading to ribosome degradation) during starvation. In Caldanaerobacter subterraneus subsp. tengcongensis (strain DSM 15242 / JCM 11007 / NBRC 100824 / MB4) (Thermoanaerobacter tengcongensis), this protein is Ribonuclease PH.